Reading from the N-terminus, the 253-residue chain is Triosephosphate isomerase (253 aa).

Residue 9-11 (NWK) participates in substrate binding. His95 acts as the Electrophile in catalysis. Glu167 serves as the catalytic Proton acceptor. Residues Gly173, Ser213, and 234–235 (GG) each bind substrate. Ser213 is subject to Phosphoserine.

The protein belongs to the triosephosphate isomerase family. As to quaternary structure, homodimer.

The protein resides in the cytoplasm. It catalyses the reaction D-glyceraldehyde 3-phosphate = dihydroxyacetone phosphate. It participates in carbohydrate biosynthesis; gluconeogenesis. It functions in the pathway carbohydrate degradation; glycolysis; D-glyceraldehyde 3-phosphate from glycerone phosphate: step 1/1. Functionally, involved in the gluconeogenesis. Catalyzes stereospecifically the conversion of dihydroxyacetone phosphate (DHAP) to D-glyceraldehyde-3-phosphate (G3P). The polypeptide is Triosephosphate isomerase (Geobacillus thermodenitrificans (strain NG80-2)).